A 248-amino-acid chain; its full sequence is Probable transcriptional regulatory protein RHECIAT_CH0003714 (248 aa).

Belongs to the TACO1 family.

It localises to the cytoplasm. This is Probable transcriptional regulatory protein RHECIAT_CH0003714 from Rhizobium etli (strain CIAT 652).